The chain runs to 116 residues: Large ribosomal subunit protein bL17 (116 aa).

Belongs to the bacterial ribosomal protein bL17 family. As to quaternary structure, part of the 50S ribosomal subunit. Contacts protein L32.

The chain is Large ribosomal subunit protein bL17 from Wolinella succinogenes (strain ATCC 29543 / DSM 1740 / CCUG 13145 / JCM 31913 / LMG 7466 / NCTC 11488 / FDC 602W) (Vibrio succinogenes).